The sequence spans 417 residues: MNEQIPHDKSLDNSLTLLKEGYLFIKNRTERYNSDLFQARLLGKNFICMTGAEAAKVFYDTDRFQRQNALPKRVQKSLFGVNAIQGMDGSAHIHRKMLFLSLMTPPHQKRLAELMTEEWKAAVTRWEKADEVVLFEEAKEILCRVACYWAGVPLKETEVKERADDFIDMVDAFGAVGPRHWKGRRARPRAEEWIEVMIEDARAGLLKTTSGTALHEMAFHTQEDGSQLDSRMAAIELINVLRPIVAISYFLVFSALALHEHPKYKEWLRSGNSREREMFVQEVRRYYPFGPFLGALVKKDFVWNNCEFKKGTSVLLDLYGTNHDPRLWDHPDEFRPERFAEREENLFDMIPQGGGHAEKGHRCPGEGITIEVMKASLDFLVHQIEYDVPEQSLHYSLARMPSLPESGFVMSGIRRKS.

Cys-363 contacts heme.

It belongs to the cytochrome P450 family. The cofactor is heme.

It carries out the reaction a 1,2-saturated fatty acid + H2O2 = a 2-hydroxy fatty acid + H2O. The enzyme catalyses a 2,3-saturated fatty acid + H2O2 = a 3-hydroxy fatty acid + H2O. It catalyses the reaction tetradecanoate + H2O2 = (3R)-hydroxytetradecanoate + H2O. The catalysed reaction is tetradecanoate + H2O2 = (2R)-hydroxytetradecanoate + H2O. It carries out the reaction tetradecanoate + H2O2 = (2S)-hydroxytetradecanoate + H2O. Its function is as follows. Catalyzes the alpha- and beta-hydroxylation of myristic acid in the presence of hydrogen peroxide. The chain is Fatty-acid peroxygenase (cypC) from Bacillus subtilis (strain 168).